Here is a 407-residue protein sequence, read N- to C-terminus: Imidazolonepropionase (407 aa).

Positions 74 and 76 each coordinate Fe(3+). Zn(2+)-binding residues include His74 and His76. 4-imidazolone-5-propanoate-binding residues include Arg83, Tyr146, and His179. Residue Tyr146 coordinates N-formimidoyl-L-glutamate. His244 is a binding site for Fe(3+). His244 lines the Zn(2+) pocket. Residue Gln247 participates in 4-imidazolone-5-propanoate binding. Residue Asp319 coordinates Fe(3+). Asp319 is a Zn(2+) binding site. Positions 321 and 323 each coordinate N-formimidoyl-L-glutamate. Thr324 is a binding site for 4-imidazolone-5-propanoate.

Belongs to the metallo-dependent hydrolases superfamily. HutI family. Zn(2+) is required as a cofactor. The cofactor is Fe(3+).

The protein resides in the cytoplasm. The enzyme catalyses 4-imidazolone-5-propanoate + H2O = N-formimidoyl-L-glutamate. It participates in amino-acid degradation; L-histidine degradation into L-glutamate; N-formimidoyl-L-glutamate from L-histidine: step 3/3. Catalyzes the hydrolytic cleavage of the carbon-nitrogen bond in imidazolone-5-propanoate to yield N-formimidoyl-L-glutamate. It is the third step in the universal histidine degradation pathway. The protein is Imidazolonepropionase of Salmonella paratyphi A (strain ATCC 9150 / SARB42).